We begin with the raw amino-acid sequence, 553 residues long: Keratin, type II cytoskeletal 6A (553 aa).

Polar residues predominate over residues 1–20 (MSTKTTIKSQTSHRGYSASS). The disordered stretch occupies residues 1–21 (MSTKTTIKSQTSHRGYSASSA). Residues 1–151 (MSTKTTIKSQ…DPTIQRVRTE (151 aa)) are head. Residues 152–187 (EREQIKTLNNKFASFIDKVRFLEQQNKVLDTKWALL) are coil 1A. An IF rod domain is found at 152–465 (EREQIKTLNN…KLLEGEECRL (314 aa)). The interval 188 to 206 (QEQGTKTVRQNLEPMFEQY) is linker 1. Positions 207 to 298 (ISNLRRQLDS…ALYEAELSQM (92 aa)) are coil 1B. A linker 12 region spans residues 299 to 322 (QTHISDTSVVLSMDNNRSLDLDSI). A coil 2 region spans residues 323–461 (IAEVKAQYED…ATYRKLLEGE (139 aa)). A tail region spans residues 462 to 553 (ECRLNGEGVG…TSSSKKSYRQ (92 aa)). A disordered region spans residues 528–553 (LSSSGGLSSSTIKYTTTSSSKKSYRQ). The span at 531-553 (SGGLSSSTIKYTTTSSSKKSYRQ) shows a compositional bias: low complexity.

Belongs to the intermediate filament family. Heterodimer of a type I and a type II keratin. KRT6 isomers associate with KRT16 and/or KRT17. Interacts with TCHP. In terms of tissue distribution, predominates in the adult trunk skin, tongue, trachea/esophagus and eye. In adult skin, localization is restricted to hair follicles, where it is localized predominantly in the outer root sheath.

In terms of biological role, epidermis-specific type I keratin involved in wound healing. Involved in the activation of follicular keratinocytes after wounding, while it does not play a major role in keratinocyte proliferation or migration. Participates in the regulation of epithelial migration by inhibiting the activity of SRC during wound repair. This is Keratin, type II cytoskeletal 6A (Krt6a) from Mus musculus (Mouse).